A 199-amino-acid chain; its full sequence is Peptidyl-tRNA hydrolase (199 aa).

Y15 contacts tRNA. H20 acts as the Proton acceptor in catalysis. Positions 66, 68, and 114 each coordinate tRNA.

Belongs to the PTH family. In terms of assembly, monomer.

It is found in the cytoplasm. The enzyme catalyses an N-acyl-L-alpha-aminoacyl-tRNA + H2O = an N-acyl-L-amino acid + a tRNA + H(+). Functionally, hydrolyzes ribosome-free peptidyl-tRNAs (with 1 or more amino acids incorporated), which drop off the ribosome during protein synthesis, or as a result of ribosome stalling. Its function is as follows. Catalyzes the release of premature peptidyl moieties from peptidyl-tRNA molecules trapped in stalled 50S ribosomal subunits, and thus maintains levels of free tRNAs and 50S ribosomes. The sequence is that of Peptidyl-tRNA hydrolase from Burkholderia cenocepacia (strain HI2424).